Consider the following 339-residue polypeptide: 5-dehydro-2-deoxygluconokinase (339 aa).

The protein belongs to the carbohydrate kinase PfkB family.

The enzyme catalyses 5-dehydro-2-deoxy-D-gluconate + ATP = 6-phospho-5-dehydro-2-deoxy-D-gluconate + ADP + H(+). It functions in the pathway polyol metabolism; myo-inositol degradation into acetyl-CoA; acetyl-CoA from myo-inositol: step 5/7. Functionally, catalyzes the phosphorylation of 5-dehydro-2-deoxy-D-gluconate (2-deoxy-5-keto-D-gluconate or DKG) to 6-phospho-5-dehydro-2-deoxy-D-gluconate (DKGP). In Clostridium botulinum (strain Alaska E43 / Type E3), this protein is 5-dehydro-2-deoxygluconokinase.